The primary structure comprises 20 residues: Pregnancy-associated glycoprotein 55h (20 aa).

N-linked (GlcNAc...) asparagine glycosylation is present at Asn4.

This sequence belongs to the peptidase A1 family. In terms of tissue distribution, highly expressed in the placenta between day 60 and day 100 of gestation.

The protein resides in the secreted. It localises to the extracellular space. This chain is Pregnancy-associated glycoprotein 55h, found in Ovis aries (Sheep).